We begin with the raw amino-acid sequence, 1296 residues long: Phosphoribosylformylglycinamidine synthase (1296 aa).

Residues 304-323 (WPGAATGSGGEIRDEGATGR) form a disordered region. ATP contacts are provided by residues 306–317 (GAATGSGGEIRD) and Ala677. 4 residues coordinate Mg(2+): Asp678, Glu717, Asn721, and Asp885. Residue Ser887 coordinates ATP. Residues 1000–1013 (PDCADQEHQAKQDE) are compositionally biased toward basic and acidic residues. The interval 1000–1019 (PDCADQEHQAKQDESDPGLN) is disordered. The 254-residue stretch at 1043 to 1296 (VAVLREQGVN…MFRNARKQLG (254 aa)) folds into the Glutamine amidotransferase type-1 domain. Cys1136 (nucleophile) is an active-site residue. Catalysis depends on residues His1261 and Glu1263.

It in the N-terminal section; belongs to the FGAMS family. In terms of assembly, monomer.

It is found in the cytoplasm. The catalysed reaction is N(2)-formyl-N(1)-(5-phospho-beta-D-ribosyl)glycinamide + L-glutamine + ATP + H2O = 2-formamido-N(1)-(5-O-phospho-beta-D-ribosyl)acetamidine + L-glutamate + ADP + phosphate + H(+). It participates in purine metabolism; IMP biosynthesis via de novo pathway; 5-amino-1-(5-phospho-D-ribosyl)imidazole from N(2)-formyl-N(1)-(5-phospho-D-ribosyl)glycinamide: step 1/2. Its function is as follows. Phosphoribosylformylglycinamidine synthase involved in the purines biosynthetic pathway. Catalyzes the ATP-dependent conversion of formylglycinamide ribonucleotide (FGAR) and glutamine to yield formylglycinamidine ribonucleotide (FGAM) and glutamate. The chain is Phosphoribosylformylglycinamidine synthase from Yersinia pseudotuberculosis serotype I (strain IP32953).